The chain runs to 94 residues: Immune protein Tsi6 (94 aa).

In terms of biological role, immunity protein that plays a role in preventing early activation of toxin Tse6. This chain is Immune protein Tsi6, found in Pseudomonas aeruginosa (strain ATCC 15692 / DSM 22644 / CIP 104116 / JCM 14847 / LMG 12228 / 1C / PRS 101 / PAO1).